A 97-amino-acid chain; its full sequence is Co-chaperonin GroES (97 aa).

This sequence belongs to the GroES chaperonin family. In terms of assembly, heptamer of 7 subunits arranged in a ring. Interacts with the chaperonin GroEL.

It is found in the cytoplasm. In terms of biological role, together with the chaperonin GroEL, plays an essential role in assisting protein folding. The GroEL-GroES system forms a nano-cage that allows encapsulation of the non-native substrate proteins and provides a physical environment optimized to promote and accelerate protein folding. GroES binds to the apical surface of the GroEL ring, thereby capping the opening of the GroEL channel. In Buchnera aphidicola subsp. Baizongia pistaciae (strain Bp), this protein is Co-chaperonin GroES.